A 315-amino-acid polypeptide reads, in one-letter code: Acetyl-coenzyme A carboxylase carboxyl transferase subunit alpha (315 aa).

One can recognise a CoA carboxyltransferase C-terminal domain in the interval 35–289 (KLSKKRFELM…RKAVAAELKI (255 aa)).

The protein belongs to the AccA family. In terms of assembly, acetyl-CoA carboxylase is a heterohexamer composed of biotin carboxyl carrier protein (AccB), biotin carboxylase (AccC) and two subunits each of ACCase subunit alpha (AccA) and ACCase subunit beta (AccD).

It is found in the cytoplasm. It carries out the reaction N(6)-carboxybiotinyl-L-lysyl-[protein] + acetyl-CoA = N(6)-biotinyl-L-lysyl-[protein] + malonyl-CoA. It participates in lipid metabolism; malonyl-CoA biosynthesis; malonyl-CoA from acetyl-CoA: step 1/1. Functionally, component of the acetyl coenzyme A carboxylase (ACC) complex. First, biotin carboxylase catalyzes the carboxylation of biotin on its carrier protein (BCCP) and then the CO(2) group is transferred by the carboxyltransferase to acetyl-CoA to form malonyl-CoA. This Francisella tularensis subsp. mediasiatica (strain FSC147) protein is Acetyl-coenzyme A carboxylase carboxyl transferase subunit alpha.